A 129-amino-acid chain; its full sequence is Phosphoribosyl-AMP cyclohydrolase (129 aa).

Position 94 (aspartate 94) interacts with Mg(2+). Cysteine 95 lines the Zn(2+) pocket. Residues aspartate 96 and aspartate 98 each contribute to the Mg(2+) site. The Zn(2+) site is built by cysteine 111 and cysteine 118.

Belongs to the PRA-CH family. In terms of assembly, homodimer. It depends on Mg(2+) as a cofactor. Zn(2+) is required as a cofactor.

Its subcellular location is the cytoplasm. The enzyme catalyses 1-(5-phospho-beta-D-ribosyl)-5'-AMP + H2O = 1-(5-phospho-beta-D-ribosyl)-5-[(5-phospho-beta-D-ribosylamino)methylideneamino]imidazole-4-carboxamide. Its pathway is amino-acid biosynthesis; L-histidine biosynthesis; L-histidine from 5-phospho-alpha-D-ribose 1-diphosphate: step 3/9. Catalyzes the hydrolysis of the adenine ring of phosphoribosyl-AMP. This is Phosphoribosyl-AMP cyclohydrolase from Corynebacterium efficiens (strain DSM 44549 / YS-314 / AJ 12310 / JCM 11189 / NBRC 100395).